The sequence spans 165 residues: Interferon gamma (165 aa).

The N-terminal stretch at 1-23 (MKYTSYILAFQLCIVLGSLGCYC) is a signal peptide. Position 24 is a pyrrolidone carboxylic acid (Gln24). Residues Asn48 and Asn120 are each glycosylated (N-linked (GlcNAc...) asparagine).

Belongs to the type II (or gamma) interferon family. As to quaternary structure, homodimer. Interacts with IFNGR1 (via extracellular domain); this interaction promotes IFNGR1 dimerization.

It localises to the secreted. Type II interferon produced by immune cells such as T-cells and NK cells that plays crucial roles in antimicrobial, antiviral, and antitumor responses by activating effector immune cells and enhancing antigen presentation. Primarily signals through the JAK-STAT pathway after interaction with its receptor IFNGR1 to affect gene regulation. Upon IFNG binding, IFNGR1 intracellular domain opens out to allow association of downstream signaling components JAK2, JAK1 and STAT1, leading to STAT1 activation, nuclear translocation and transcription of IFNG-regulated genes. Many of the induced genes are transcription factors such as IRF1 that are able to further drive regulation of a next wave of transcription. Plays a role in class I antigen presentation pathway by inducing a replacement of catalytic proteasome subunits with immunoproteasome subunits. In turn, increases the quantity, quality, and repertoire of peptides for class I MHC loading. Increases the efficiency of peptide generation also by inducing the expression of activator PA28 that associates with the proteasome and alters its proteolytic cleavage preference. Up-regulates as well MHC II complexes on the cell surface by promoting expression of several key molecules such as cathepsins B/CTSB, H/CTSH, and L/CTSL. Participates in the regulation of hematopoietic stem cells during development and under homeostatic conditions by affecting their development, quiescence, and differentiation. This chain is Interferon gamma (IFNG), found in Papio anubis (Olive baboon).